We begin with the raw amino-acid sequence, 354 residues long: Polyprenal reductase 1 (354 aa).

A run of 6 helical transmembrane segments spans residues 11–31 (PLLC…ALPI), 78–98 (FMHF…AIWF), 141–158 (YHVW…IQVL), 176–196 (MHIV…LSLA), 235–255 (PLLK…WGSL), and 301–321 (GMLV…VFVI).

It belongs to the steroid 5-alpha reductase family. Polyprenal reductase subfamily.

It is found in the cell membrane. The enzyme catalyses a di-trans,poly-cis-dolichal + NADP(+) = a di-trans,poly-cis-polyprenal + NADPH + H(+). The protein operates within protein modification; protein glycosylation. Plays a key role in early steps of protein N-linked glycosylation by being involved in the conversion of polyprenol into dolichol. Acts as a polyprenal reductase that mediates the reduction of polyprenal into dolichal in a NADP-dependent mechanism. Dolichols are required for the synthesis of dolichol-linked monosaccharides and the oligosaccharide precursor used for N-glycosylation. The chain is Polyprenal reductase 1 from Oryza sativa subsp. indica (Rice).